A 158-amino-acid polypeptide reads, in one-letter code: Transcriptional repressor NrdR (158 aa).

The interval 1-20 (MRCPSCGSLDTQVKDSRPTE) is disordered. Residues 3–34 (CPSCGSLDTQVKDSRPTEDSSVIRRRRVCLTC) fold into a zinc finger. Residues 49–139 (LTVIKRNGRR…VYRNFREAKD (91 aa)) form the ATP-cone domain.

Belongs to the NrdR family. It depends on Zn(2+) as a cofactor.

Negatively regulates transcription of bacterial ribonucleotide reductase nrd genes and operons by binding to NrdR-boxes. The sequence is that of Transcriptional repressor NrdR from Afipia carboxidovorans (strain ATCC 49405 / DSM 1227 / KCTC 32145 / OM5) (Oligotropha carboxidovorans).